Consider the following 461-residue polypeptide: Chromosomal replication initiator protein DnaA (461 aa).

The segment at 1–87 (MAVSLWQQCI…IGSRPSAKPV (87 aa)) is domain I, interacts with DnaA modulators. Residues 87-124 (VVQATAAVRTSRPVTREVTKPSFNTPHAEPMANANHRS) form a domain II region. Residues 99 to 125 (PVTREVTKPSFNTPHAEPMANANHRSN) form a disordered region. The segment at 125-341 (NINPTYQFDN…GALNRVIANA (217 aa)) is domain III, AAA+ region. ATP contacts are provided by Gly169, Gly171, Lys172, and Thr173. The tract at residues 342–461 (NFTGRPITID…YANLIRTLSS (120 aa)) is domain IV, binds dsDNA.

Belongs to the DnaA family. In terms of assembly, oligomerizes as a right-handed, spiral filament on DNA at oriC.

Its subcellular location is the cytoplasm. Plays an essential role in the initiation and regulation of chromosomal replication. ATP-DnaA binds to the origin of replication (oriC) to initiate formation of the DNA replication initiation complex once per cell cycle. Binds the DnaA box (a 9 base pair repeat at the origin) and separates the double-stranded (ds)DNA. Forms a right-handed helical filament on oriC DNA; dsDNA binds to the exterior of the filament while single-stranded (ss)DNA is stabiized in the filament's interior. The ATP-DnaA-oriC complex binds and stabilizes one strand of the AT-rich DNA unwinding element (DUE), permitting loading of DNA polymerase. After initiation quickly degrades to an ADP-DnaA complex that is not apt for DNA replication. Binds acidic phospholipids. This is Chromosomal replication initiator protein DnaA from Shewanella pealeana (strain ATCC 700345 / ANG-SQ1).